The following is a 354-amino-acid chain: Serum paraoxonase/arylesterase 2 (354 aa).

A disulfide bridge links Cys-42 with Cys-352. Ca(2+)-binding residues include Asp-53 and Asp-54. Residue His-114 is the Proton acceptor of the active site. The Ca(2+) site is built by Ile-116, Asn-167, Asp-168, and Asn-223. Asn-254 is a glycosylation site (N-linked (GlcNAc...) asparagine). Ca(2+) contacts are provided by Asp-268 and Asn-269. Residues Asn-269 and Asn-323 are each glycosylated (N-linked (GlcNAc...) asparagine).

This sequence belongs to the paraoxonase family. Homotrimer. It depends on Ca(2+) as a cofactor. Post-translationally, glycosylated. The signal sequence is not cleaved.

The protein resides in the membrane. It carries out the reaction a phenyl acetate + H2O = a phenol + acetate + H(+). The catalysed reaction is an N-acyl-L-homoserine lactone + H2O = an N-acyl-L-homoserine + H(+). Its function is as follows. Capable of hydrolyzing lactones and a number of aromatic carboxylic acid esters. The polypeptide is Serum paraoxonase/arylesterase 2 (PON2) (Canis lupus familiaris (Dog)).